The chain runs to 557 residues: Probable phenylalanine--tRNA ligase beta subunit (557 aa).

The region spanning 276-352 (MHNRSYVMGL…IAHGFNNFRR (77 aa)) is the B5 domain. Positions 330, 336, 339, and 340 each coordinate Mg(2+).

This sequence belongs to the phenylalanyl-tRNA synthetase beta subunit family. Type 2 subfamily. In terms of assembly, tetramer of two alpha and two beta subunits. It depends on Mg(2+) as a cofactor.

Its subcellular location is the cytoplasm. The enzyme catalyses tRNA(Phe) + L-phenylalanine + ATP = L-phenylalanyl-tRNA(Phe) + AMP + diphosphate + H(+). This is Probable phenylalanine--tRNA ligase beta subunit from Encephalitozoon cuniculi (strain GB-M1) (Microsporidian parasite).